The primary structure comprises 539 residues: Probable quinate permease (539 aa).

Topologically, residues 1-22 (MSILSMVEDRPTPKEVYNWRIY) are cytoplasmic. A helical transmembrane segment spans residues 23–43 (LLAAVASFTSCMIGYDSAFIG). The Extracellular portion of the chain corresponds to 44 to 74 (TTISLDSFKNEFHWDSMSTAKQNLVSANIVS). Residues 75-95 (CYQAGAFFGAFFAYPIGHFWG) traverse the membrane as a helical segment. The Cytoplasmic segment spans residues 96 to 97 (RK). The helical transmembrane segment at 98–118 (WGLMLSALVFTLGAGLMLGAN) threads the bilayer. Residues 119 to 130 (GDRGLGLIYGGR) are Extracellular-facing. Residues 131-151 (VLAGLGVGAGSNFTPIYISEL) form a helical membrane-spanning segment. Over 152–159 (APPAIRGR) the chain is Cytoplasmic. The chain crosses the membrane as a helical span at residues 160–180 (LVGVYELGWQVGGLVGFWINY). The Extracellular portion of the chain corresponds to 181–193 (GVEQTMAPSHKQW). Residues 194 to 214 (LIPFAVQLIPAGLLIIGILFV) form a helical membrane-spanning segment. The Cytoplasmic portion of the chain corresponds to 215-285 (KESPRWLFLR…AWTNKRILYR (71 aa)). The helical transmembrane segment at 286 to 306 (LFLGSMLFFWQNGSGINAINY) threads the bilayer. At 307–325 (YSPTVFKSIGLKGNSSSLL) the chain is on the extracellular side. The chain crosses the membrane as a helical span at residues 326 to 346 (TTGIFGVVKTVVTIVWLLYLI). Residues 347–352 (DHVGRR) lie on the Cytoplasmic side of the membrane. The helical transmembrane segment at 353–373 (LLLLIGAAGGSICMWIVGAYI) threads the bilayer. Residues 374-387 (KVVDPTHNQSDHLN) are Extracellular-facing. The helical transmembrane segment at 388–408 (GGGVAAIFFFYLWTAFYTPSW) threads the bilayer. Residues 409-456 (NGTPWVINSEMFDPNIRSLAQACAAGSNWLWNFLISRFTPQMFAKMDY) are Cytoplasmic-facing. The chain crosses the membrane as a helical span at residues 457-477 (GVYFFFASLMLLSIPFVFFLV). Residues 478–539 (PETKGIPLEN…EQVEDTDRKE (62 aa)) lie on the Extracellular side of the membrane.

It belongs to the major facilitator superfamily. Sugar transporter (TC 2.A.1.1) family. Interacts with creB. In terms of processing, ubiquitinated. Deubiquitinated by creB, probably to control its activity or amount.

The protein resides in the cell membrane. In terms of biological role, integral membrane transporter that imports quinic acid to be catabolized as a carbon source. This is Probable quinate permease (qutD) from Aspergillus niger (strain ATCC MYA-4892 / CBS 513.88 / FGSC A1513).